Consider the following 334-residue polypeptide: ADP-L-glycero-D-manno-heptose-6-epimerase (334 aa).

NADP(+) contacts are provided by residues 11–12 (FI), 32–33 (DN), K39, K54, 77–81 (QGACS), and N94. Y141 (proton acceptor) is an active-site residue. K145 provides a ligand contact to NADP(+). N171 is a binding site for substrate. NADP(+) is bound by residues V172 and K180. Residue K180 is the Proton acceptor of the active site. Substrate contacts are provided by residues R182, H189, 203–206 (FGSN), R216, and Y295.

The protein belongs to the NAD(P)-dependent epimerase/dehydratase family. HldD subfamily. Homopentamer. NADP(+) is required as a cofactor.

The enzyme catalyses ADP-D-glycero-beta-D-manno-heptose = ADP-L-glycero-beta-D-manno-heptose. The protein operates within nucleotide-sugar biosynthesis; ADP-L-glycero-beta-D-manno-heptose biosynthesis; ADP-L-glycero-beta-D-manno-heptose from D-glycero-beta-D-manno-heptose 7-phosphate: step 4/4. It functions in the pathway bacterial outer membrane biogenesis; LOS core biosynthesis. Functionally, catalyzes the interconversion between ADP-D-glycero-beta-D-manno-heptose and ADP-L-glycero-beta-D-manno-heptose via an epimerization at carbon 6 of the heptose. This Neisseria meningitidis serogroup A / serotype 4A (strain DSM 15465 / Z2491) protein is ADP-L-glycero-D-manno-heptose-6-epimerase.